Reading from the N-terminus, the 222-residue chain is MHAAVVVFPGSNCDRDLAVAFEAAGAQVTKVWHKDTDLPEGVDIIGIPGGFSFGDYLRCGAIAANSPICRSVAAHAERGGYVIGICNGFQVLTETGLLPGALLRNAGLKYICKTVALKVETSASAFTEGYTAGDTISIPIAHHDGNYFADDETIARLQGEDRVAFTYEDTPNGAKADIAGILSSNRRVLGMMPHPERAADAGHGGTDGQALFRALTGALAAV.

Residues Ala3–Val222 form the Glutamine amidotransferase type-1 domain. Catalysis depends on Cys86, which acts as the Nucleophile. Catalysis depends on residues His194 and Glu196.

As to quaternary structure, part of the FGAM synthase complex composed of 1 PurL, 1 PurQ and 2 PurS subunits.

It is found in the cytoplasm. It catalyses the reaction N(2)-formyl-N(1)-(5-phospho-beta-D-ribosyl)glycinamide + L-glutamine + ATP + H2O = 2-formamido-N(1)-(5-O-phospho-beta-D-ribosyl)acetamidine + L-glutamate + ADP + phosphate + H(+). The catalysed reaction is L-glutamine + H2O = L-glutamate + NH4(+). It functions in the pathway purine metabolism; IMP biosynthesis via de novo pathway; 5-amino-1-(5-phospho-D-ribosyl)imidazole from N(2)-formyl-N(1)-(5-phospho-D-ribosyl)glycinamide: step 1/2. Its function is as follows. Part of the phosphoribosylformylglycinamidine synthase complex involved in the purines biosynthetic pathway. Catalyzes the ATP-dependent conversion of formylglycinamide ribonucleotide (FGAR) and glutamine to yield formylglycinamidine ribonucleotide (FGAM) and glutamate. The FGAM synthase complex is composed of three subunits. PurQ produces an ammonia molecule by converting glutamine to glutamate. PurL transfers the ammonia molecule to FGAR to form FGAM in an ATP-dependent manner. PurS interacts with PurQ and PurL and is thought to assist in the transfer of the ammonia molecule from PurQ to PurL. This chain is Phosphoribosylformylglycinamidine synthase subunit PurQ, found in Roseobacter denitrificans (strain ATCC 33942 / OCh 114) (Erythrobacter sp. (strain OCh 114)).